We begin with the raw amino-acid sequence, 367 residues long: Glutamate 5-kinase (367 aa).

Lysine 10 contacts ATP. Serine 50, aspartate 137, and asparagine 149 together coordinate substrate. ATP contacts are provided by residues 169 to 170 (TD) and 211 to 217 (TGGMSTK). One can recognise a PUA domain in the interval 275 to 353 (AGEITVDEGA…QEIDAILGYE (79 aa)).

Belongs to the glutamate 5-kinase family.

Its subcellular location is the cytoplasm. The enzyme catalyses L-glutamate + ATP = L-glutamyl 5-phosphate + ADP. The protein operates within amino-acid biosynthesis; L-proline biosynthesis; L-glutamate 5-semialdehyde from L-glutamate: step 1/2. Functionally, catalyzes the transfer of a phosphate group to glutamate to form L-glutamate 5-phosphate. The polypeptide is Glutamate 5-kinase (Shigella flexneri).